Here is a 142-residue protein sequence, read N- to C-terminus: Group IIE secretory phospholipase A2 (142 aa).

An N-terminal signal peptide occupies residues 1 to 19 (MKSPHVLVFLCLLVALVTG). Residues D41, G43, Y45, G47, and G49 each coordinate Ca(2+). Disulfide bonds link C44–C135, C46–C62, C61–C115, C67–C142, C68–C108, C77–C101, and C95–C106. Residue H65 is part of the active site. D66 serves as a coordination point for Ca(2+). The active site involves D109. Ca(2+)-binding residues include Y130 and N132.

Belongs to the phospholipase A2 family. It depends on Ca(2+) as a cofactor. In terms of tissue distribution, restricted to the brain, heart, lung, and placenta.

The protein localises to the secreted. It localises to the cytoplasm. The catalysed reaction is a 1,2-diacyl-sn-glycero-3-phosphoethanolamine + H2O = a 1-acyl-sn-glycero-3-phosphoethanolamine + a fatty acid + H(+). The enzyme catalyses 1-hexadecanoyl-2-(9Z-octadecenoyl)-sn-glycero-3-phosphoethanolamine + H2O = 1-hexadecanoyl-sn-glycero-3-phosphoethanolamine + (9Z)-octadecenoate + H(+). It carries out the reaction 1-hexadecanoyl-2-(9Z,12Z-octadecadienoyl)-sn-glycero-3-phosphoethanolamine + H2O = 1-hexadecanoyl-sn-glycero-3-phosphoethanolamine + (9Z,12Z)-octadecadienoate + H(+). It catalyses the reaction 1-hexadecanoyl-2-(5Z,8Z,11Z,14Z-eicosatetraenoyl)-sn-glycero-3-phosphoethanolamine + H2O = 1-hexadecanoyl-sn-glycero-3-phosphoethanolamine + (5Z,8Z,11Z,14Z)-eicosatetraenoate + H(+). The catalysed reaction is 1,2-dihexadecanoyl-sn-glycero-3-phospho-(1'-sn-glycerol) + H2O = 1-hexadecanoyl-sn-glycero-3-phospho-(1'-sn-glycerol) + hexadecanoate + H(+). The enzyme catalyses 1-hexadecanoyl-2-(9Z-octadecenoyl)-sn-glycero-3-phosphoglycerol + H2O = 1-hexadecanoyl-sn-glycero-3-phosphoglycerol + (9Z)-octadecenoate + H(+). It carries out the reaction a 1,2-diacyl-sn-glycero-3-phosphocholine + H2O = a 1-acyl-sn-glycero-3-phosphocholine + a fatty acid + H(+). It catalyses the reaction 1,2-dihexadecanoyl-sn-glycero-3-phosphocholine + H2O = 1-hexadecanoyl-sn-glycero-3-phosphocholine + hexadecanoate + H(+). The catalysed reaction is 1-hexadecanoyl-2-(9Z-octadecenoyl)-sn-glycero-3-phosphocholine + H2O = 1-hexadecanoyl-sn-glycero-3-phosphocholine + (9Z)-octadecenoate + H(+). The enzyme catalyses 1-hexadecanoyl-2-(9Z,12Z-octadecadienoyl)-sn-glycero-3-phosphocholine + H2O = (9Z,12Z)-octadecadienoate + 1-hexadecanoyl-sn-glycero-3-phosphocholine + H(+). It carries out the reaction 1-hexadecanoyl-2-(4Z,7Z,10Z,13Z,16Z,19Z-docosahexaenoyl)-sn-glycero-3-phosphocholine + H2O = (4Z,7Z,10Z,13Z,16Z,19Z)-docosahexaenoate + 1-hexadecanoyl-sn-glycero-3-phosphocholine + H(+). Its function is as follows. Secretory calcium-dependent phospholipase A2 that primarily targets extracellular phospholipids. Hydrolyzes the ester bond of the fatty acyl group attached at sn-2 position of phospholipids (phospholipase A2 activity), releasing various unsaturated fatty acids including oleoate, linoleoate, arachidonate, docosahexaenoate and lysophosphatidylethanolamines in preference to lysophosphatidylcholines. In response to high-fat diet, hydrolyzes minor lipoprotein phospholipids including phosphatidylserines, phosphatidylinositols and phosphatidylglycerols, altering lipoprotein composition and fat storage in adipose tissue and liver. May act in an autocrine and paracrine manner. Contributes to lipid remodeling of cellular membranes and generation of lipid mediators involved in pathogen clearance. Cleaves sn-2 fatty acyl chains of phosphatidylglycerols and phosphatidylethanolamines, which are major components of membrane phospholipids in bacteria. Acts as a hair follicle phospholipase A2. Selectively releases lysophosphatidylethanolamines (LPE) and various unsaturated fatty acids in skin to regulate hair follicle homeostasis. May regulate the inflammatory response by releasing arachidonate, a precursor of prostaglandins and leukotrienes. Upon allergen exposure, may participate in allergic inflammatory response by enhancing leukotriene C4 synthesis and degranulation in mast cells. The polypeptide is Group IIE secretory phospholipase A2 (PLA2G2E) (Homo sapiens (Human)).